The following is a 22-amino-acid chain: Mu-conotoxin SxIIIC (22 aa).

Disulfide bonds link Cys-3-Cys-15, Cys-4-Cys-21, and Cys-10-Cys-22. The residue at position 22 (Cys-22) is a Cysteine amide.

It belongs to the conotoxin M superfamily. As to expression, expressed by the venom duct.

The protein localises to the secreted. Its function is as follows. Mu-conotoxins block voltage-gated sodium channels (Nav). This toxin potently inhibits hNav1.4/SCN4A (IC(50)=15.11 nM). It also displays lower activities on other human subtypes (Nav1.1/SCN1A; IC(50)=132 nM, Nav1.2/SCN2A; IC(50)=363.8, Nav1.3/SCN3A; IC(50)=89.4, Nav1.6/SCN3A; IC(50)=124.9, Nav1.7/SCN7A; IC(50)=152.2). At Nav1.7/SCN9A, it does not elicit change in channel voltage-dependence of fast inactivation or activation, suggesting it acts as a pore blocker. Interestingly, it blocks current inhibition in an irreversible manner (tested during 35 minutes). The polypeptide is Mu-conotoxin SxIIIC (Conus striolatus (Cone snail)).